The primary structure comprises 95 residues: Co-chaperonin GroES (95 aa).

This sequence belongs to the GroES chaperonin family. In terms of assembly, heptamer of 7 subunits arranged in a ring. Interacts with the chaperonin GroEL.

The protein resides in the cytoplasm. Its function is as follows. Together with the chaperonin GroEL, plays an essential role in assisting protein folding. The GroEL-GroES system forms a nano-cage that allows encapsulation of the non-native substrate proteins and provides a physical environment optimized to promote and accelerate protein folding. GroES binds to the apical surface of the GroEL ring, thereby capping the opening of the GroEL channel. In Staphylococcus haemolyticus (strain JCSC1435), this protein is Co-chaperonin GroES.